Consider the following 181-residue polypeptide: Translationally-controlled tumor protein homolog (181 aa).

The TCTP domain maps to 1-181 (MLIFKDAFTD…VKEALIEEKQ (181 aa)).

This sequence belongs to the TCTP family.

It localises to the cytoplasm. In terms of biological role, involved in calcium binding and microtubule stabilization. This is Translationally-controlled tumor protein homolog from Brugia malayi (Filarial nematode worm).